Consider the following 420-residue polypeptide: Probable pectate lyase C (420 aa).

The N-terminal stretch at 1 to 20 (MKLSAPLLVSLAAFSQAVTA) is a signal peptide. Residues asparagine 49, asparagine 165, and asparagine 202 are each glycosylated (N-linked (GlcNAc...) asparagine). The active site involves arginine 205. The EF-hand domain maps to 262–297 (NANFHGYVQNNYYDPDKDGQLDGFELGVSSSNYGGV). Ca(2+) contacts are provided by aspartate 275, aspartate 277, aspartate 279, glutamine 281, and glutamate 286. The tract at residues 358 to 396 (TMGGPGTLNGGTPAKDTDGDGIPDEAEKQLGTDPNTNDS) is disordered. Asparagine 394 is a glycosylation site (N-linked (GlcNAc...) asparagine).

It belongs to the polysaccharide lyase 1 family. The cofactor is Ca(2+).

It localises to the secreted. It carries out the reaction Eliminative cleavage of (1-&gt;4)-alpha-D-galacturonan to give oligosaccharides with 4-deoxy-alpha-D-galact-4-enuronosyl groups at their non-reducing ends.. Pectinolytic enzyme consist of four classes of enzymes: pectin lyase, polygalacturonase, pectin methylesterase and rhamnogalacturonase. Among pectinolytic enzymes, pectin lyase is the most important in depolymerization of pectin, since it cleaves internal glycosidic bonds of highly methylated pectins. Favors pectate, the anion, over pectin, the methyl ester. The polypeptide is Probable pectate lyase C (plyC) (Aspergillus fumigatus (strain CBS 144.89 / FGSC A1163 / CEA10) (Neosartorya fumigata)).